A 763-amino-acid chain; its full sequence is Long-chain-fatty-acid--CoA ligase ACSBG2 (763 aa).

The segment at cysteine 47–tryptophan 78 is disordered. Residues proline 51–glutamine 61 show a composition bias toward basic and acidic residues. The segment covering methionine 62–tryptophan 78 has biased composition (polar residues). Residues threonine 281–lysine 289, glutamate 472–serine 477, aspartate 550, arginine 565, and lysine 678 each bind ATP.

Belongs to the ATP-dependent AMP-binding enzyme family. Bubblegum subfamily.

The protein localises to the cytoplasm. It carries out the reaction a long-chain fatty acid + ATP + CoA = a long-chain fatty acyl-CoA + AMP + diphosphate. The catalysed reaction is (5Z,8Z,11Z,14Z)-eicosatetraenoate + ATP + CoA = (5Z,8Z,11Z,14Z)-eicosatetraenoyl-CoA + AMP + diphosphate. It catalyses the reaction hexadecanoate + ATP + CoA = hexadecanoyl-CoA + AMP + diphosphate. The enzyme catalyses (9Z)-octadecenoate + ATP + CoA = (9Z)-octadecenoyl-CoA + AMP + diphosphate. It carries out the reaction (9Z,12Z)-octadecadienoate + ATP + CoA = (9Z,12Z)-octadecadienoyl-CoA + AMP + diphosphate. The catalysed reaction is tetracosanoate + ATP + CoA = tetracosanoyl-CoA + AMP + diphosphate. Functionally, mediates activation of long-chain fatty acids for both synthesis of cellular lipids, and degradation via beta-oxidation. Catalyzes the conversion of fatty acids such as long chain and very long-chain fatty acids to their active form acyl-CoAs for both synthesis of cellular lipids, and degradation via beta-oxidation. Can activate diverse saturated, monosaturated and polyunsaturated fatty acids. The polypeptide is Long-chain-fatty-acid--CoA ligase ACSBG2 (Gallus gallus (Chicken)).